Consider the following 418-residue polypeptide: Elongation factor 1-gamma 2 (418 aa).

The GST N-terminal domain maps to 1-82 (MALVLHAGSG…YVTRSKADNP (82 aa)). Residues 87-215 (SLIEYAHIEQ…VKQAESVPPV (129 aa)) enclose the GST C-terminal domain. A disordered region spans residues 210–265 (ESVPPVQKKAPPPKEQKPKEAKKEAPKEAPKPKAVEKPEEEEEAPKPKPKNPLDLL). The segment covering 221–246 (PPKEQKPKEAKKEAPKEAPKPKAVEK) has biased composition (basic and acidic residues). The region spanning 258–418 (PKNPLDLLPP…ESLLDAKCFK (161 aa)) is the EF-1-gamma C-terminal domain.

EF-1 is composed of four subunits: alpha, beta, delta, and gamma.

In terms of biological role, probably plays a role in anchoring the complex to other cellular components. In Oryza sativa subsp. japonica (Rice), this protein is Elongation factor 1-gamma 2.